Here is a 353-residue protein sequence, read N- to C-terminus: Mitogen-activated protein kinase FUS3 (353 aa).

The Protein kinase domain occupies 13–309 (FQLKSLLGEG…AKEALEHPYL (297 aa)). ATP-binding positions include 19–27 (LGEGAYGVV) and Lys42. Asp137 functions as the Proton acceptor in the catalytic mechanism. Position 180 is a phosphothreonine (Thr180). The TXY signature appears at 180 to 182 (TEY). The residue at position 182 (Tyr182) is a Phosphotyrosine. Lys345 is covalently cross-linked (Glycyl lysine isopeptide (Lys-Gly) (interchain with G-Cter in ubiquitin)).

It belongs to the protein kinase superfamily. CMGC Ser/Thr protein kinase family. MAP kinase subfamily. In terms of assembly, in the nucleus, FUS3 forms a complex with DIG1, DIG2 and STE12. The interaction of FUS3 with STE12 depends on the presence of both DIG1 and DIG2. STE12 is lost from FUS3/DIG1/DIG2 complex after pheromone treatment. During its activation and phosphorylation, FUS3 forms a membrane-associated complex with the scaffold protein STE5, the MAPKK STE7, the MAPKKK STE11, and the G-protein beta subunit GBB/STE4; interacting directly with STE7 and STE5. It depends on Mg(2+) as a cofactor. Post-translationally, dually phosphorylated on Thr-180 and Tyr-182 by STE7 in response to pheromone induction, which activates the enzyme. Activated FUS3 initiates a feedback signal, down-regulating phosphorylation of both, FUS3 and KSS1.

The protein resides in the nucleus. It localises to the cytoplasm. It is found in the periplasm. It catalyses the reaction L-seryl-[protein] + ATP = O-phospho-L-seryl-[protein] + ADP + H(+). The catalysed reaction is L-threonyl-[protein] + ATP = O-phospho-L-threonyl-[protein] + ADP + H(+). With respect to regulation, activated by tyrosine and threonine phosphorylation after pheromone treatment. Together with closely related KSS1, FUS3 is the final kinase in the signal transduction cascade regulating activation/repression of the mating and filamentation pathways, induced by pheromone and nitrogen/carbon limitation, respectively. Phosphorylated FUS3 activates the mating but suppresses the filamentation pathway, whereas activated KSS1 activates both pathways. Pheromone-activated FUS3 functions by inhibiting the binding of the transcriptional activator STE12 to filamentation specific genes while inducing its binding to and activity at mating specific genes. Non-activated FUS3 has a repressive effect on STE12 transcriptional activity. KSS1 can partially compensate for the lack of FUS3 but mating efficiency is reduced and the filamentation program is partially activated upon pheromone signaling. FUS3 phosphorylates STE7, STE5, FAR1, DIG1, DIG2 and STE12. In Saccharomyces cerevisiae (strain ATCC 204508 / S288c) (Baker's yeast), this protein is Mitogen-activated protein kinase FUS3 (FUS3).